The following is a 290-amino-acid chain: ATP synthase gamma chain (290 aa).

The protein belongs to the ATPase gamma chain family. F-type ATPases have 2 components, CF(1) - the catalytic core - and CF(0) - the membrane proton channel. CF(1) has five subunits: alpha(3), beta(3), gamma(1), delta(1), epsilon(1). CF(0) has three main subunits: a, b and c.

Its subcellular location is the cell inner membrane. Functionally, produces ATP from ADP in the presence of a proton gradient across the membrane. The gamma chain is believed to be important in regulating ATPase activity and the flow of protons through the CF(0) complex. This is ATP synthase gamma chain from Buchnera aphidicola subsp. Acyrthosiphon pisum (strain APS) (Acyrthosiphon pisum symbiotic bacterium).